A 487-amino-acid chain; its full sequence is Acetyl-coenzyme A carboxylase carboxyl transferase subunit beta, chloroplastic (487 aa).

A disordered region spans residues 180–201 (SRNSSENEGSSKRTRTKGSDLT). A CoA carboxyltransferase N-terminal domain is found at 218–487 (LWVQCENCYG…PLNQKSSKIK (270 aa)). Zn(2+) is bound by residues C222, C225, C241, and C244. A C4-type zinc finger spans residues 222–244 (CENCYGLNYKKFLKSKMNICEQC).

The protein belongs to the AccD/PCCB family. As to quaternary structure, acetyl-CoA carboxylase is a heterohexamer composed of biotin carboxyl carrier protein, biotin carboxylase and 2 subunits each of ACCase subunit alpha and ACCase plastid-coded subunit beta (accD). It depends on Zn(2+) as a cofactor.

Its subcellular location is the plastid. It localises to the chloroplast stroma. The enzyme catalyses N(6)-carboxybiotinyl-L-lysyl-[protein] + acetyl-CoA = N(6)-biotinyl-L-lysyl-[protein] + malonyl-CoA. Its pathway is lipid metabolism; malonyl-CoA biosynthesis; malonyl-CoA from acetyl-CoA: step 1/1. In terms of biological role, component of the acetyl coenzyme A carboxylase (ACC) complex. Biotin carboxylase (BC) catalyzes the carboxylation of biotin on its carrier protein (BCCP) and then the CO(2) group is transferred by the transcarboxylase to acetyl-CoA to form malonyl-CoA. The protein is Acetyl-coenzyme A carboxylase carboxyl transferase subunit beta, chloroplastic of Atropa belladonna (Belladonna).